We begin with the raw amino-acid sequence, 72 residues long: Translation initiation factor IF-1 (72 aa).

One can recognise an S1-like domain in the interval 1-72; that stretch reads MAKEESIEIE…TKGRITYRYK (72 aa).

This sequence belongs to the IF-1 family. In terms of assembly, component of the 30S ribosomal translation pre-initiation complex which assembles on the 30S ribosome in the order IF-2 and IF-3, IF-1 and N-formylmethionyl-tRNA(fMet); mRNA recruitment can occur at any time during PIC assembly.

The protein localises to the cytoplasm. Its function is as follows. One of the essential components for the initiation of protein synthesis. Stabilizes the binding of IF-2 and IF-3 on the 30S subunit to which N-formylmethionyl-tRNA(fMet) subsequently binds. Helps modulate mRNA selection, yielding the 30S pre-initiation complex (PIC). Upon addition of the 50S ribosomal subunit IF-1, IF-2 and IF-3 are released leaving the mature 70S translation initiation complex. The protein is Translation initiation factor IF-1 of Chlorobium chlorochromatii (strain CaD3).